Here is a 164-residue protein sequence, read N- to C-terminus: Ribosome-binding factor A (164 aa).

It belongs to the RbfA family. Monomer. Binds 30S ribosomal subunits, but not 50S ribosomal subunits or 70S ribosomes.

Its subcellular location is the cytoplasm. Functionally, one of several proteins that assist in the late maturation steps of the functional core of the 30S ribosomal subunit. Associates with free 30S ribosomal subunits (but not with 30S subunits that are part of 70S ribosomes or polysomes). Required for efficient processing of 16S rRNA. May interact with the 5'-terminal helix region of 16S rRNA. This is Ribosome-binding factor A from Mycobacterium leprae (strain Br4923).